A 1133-amino-acid chain; its full sequence is SH3 and PX domain-containing protein 2A (1133 aa).

Residues 4–128 (YCVQDATVVD…RFFEARPEDV (125 aa)) form the PX domain. The SH3 1 domain occupies 166-225 (MILEQYVVVSNYKKQENSELSLQAGEVVDVIEKNESGWWFVSTSEEQGWVPATYLEAQNG). Phosphothreonine is present on Thr256. The SH3 2 domain occupies 266 to 325 (SREEKYVTVQPYTSQSKDEIGFEKGVTVEVIRKNLEGWWYIRYLGKEGWAPASYLKKAKD). Ser406 and Ser421 each carry phosphoserine. Disordered regions lie at residues 415–446 (QRAQ…PPEP), 505–840 (RKKP…EWEG), 899–924 (NEQP…GKSD), and 941–964 (QSKK…SGTP). Positions 448–507 (SVEVEYYTIAEFQSCISDGISFRGGQKAEVIDKNSGGWWYVQIGEKEGWAPASYIDKRKK) constitute an SH3 3 domain. A compositionally biased stretch (basic and acidic residues) spans 546 to 555 (DSPRKLKYEE). Residues Ser547 and Ser567 each carry the phosphoserine modification. Over residues 567 to 576 (SEPELSEEPV) the composition is skewed to acidic residues. The span at 577-586 (EDRASGERRP) shows a compositional bias: basic and acidic residues. Ser593 bears the Phosphoserine mark. Acidic residues predominate over residues 608-620 (SSEDVALEEETIY). Composition is skewed to low complexity over residues 634 to 652 (SARG…SLSL), 658 to 670 (PKSG…SLLK), and 686 to 715 (SSAS…SKTS). A Phosphoserine modification is found at Ser644. Thr731 bears the Phosphothreonine mark. Residues Ser767, Ser769, and Ser819 each carry the phosphoserine modification. Thr829 carries the phosphothreonine modification. Positions 840 to 899 (GPATSYMTCSAYQKVQDSEISFPAGVEVQVLEKQESGWWYVRFGELEGWAPSHYLVLDEN) constitute an SH3 4 domain. Residues 917 to 946 (RQNEGKSDSLEKIERRVQALNTVNQSKKAT) are a coiled coil. Ser1002, Ser1016, Ser1017, and Ser1038 each carry phosphoserine. The segment at 1029–1059 (KGRLAERAASQGSDSPLLPAQRNSIPVSPVR) is disordered. An SH3 5 domain is found at 1072–1133 (NLKDVYVSIA…VPSNYLEKKN (62 aa)).

Belongs to the SH3PXD2 family. As to quaternary structure, interacts (via N-terminus) with CYBA. Interacts with ADAM12, ADAM15 and ADAM19. Interacts with NOXO1. Interacts (via SH3 domains) with NOXA1. Interacts with FASLG. Interacts (via PX domain) with RAB40B (GTP-bound); interaction promotes invadopodia-mediated extracellular matrix degradation. In terms of processing, tyrosine phosphorylated by SRC. Phosphorylation plays a regulatory role in the protein localization. The intramolecular interaction of the PX domain with the third SH3 domain maintains the protein in the cytoplasm and phosphorylation disrupts this interaction, resulting in the redistribution of the protein from cytoplasm to the perimembrane region. Phosphorylated on serine upon DNA damage, probably by ATM or ATR. In terms of tissue distribution, found in several cancer cell lines, particularly invasive breast carcinomas and melanomas.

Its subcellular location is the cytoplasm. It is found in the cell projection. The protein localises to the podosome. Adapter protein involved in invadopodia and podosome formation, extracellular matrix degradation and invasiveness of some cancer cells. Binds matrix metalloproteinases (ADAMs), NADPH oxidases (NOXs) and phosphoinositides. Acts as an organizer protein that allows NOX1- or NOX3-dependent reactive oxygen species (ROS) generation and ROS localization. In association with ADAM12, mediates the neurotoxic effect of amyloid-beta peptide. The sequence is that of SH3 and PX domain-containing protein 2A from Homo sapiens (Human).